Reading from the N-terminus, the 374-residue chain is UDP-N-acetylglucosamine--N-acetylmuramyl-(pentapeptide) pyrophosphoryl-undecaprenol N-acetylglucosamine transferase (374 aa).

UDP-N-acetyl-alpha-D-glucosamine-binding positions include 13 to 15 (TGG), Asn-124, Arg-165, Ser-193, and Gln-294.

Belongs to the glycosyltransferase 28 family. MurG subfamily.

The protein localises to the cell inner membrane. The catalysed reaction is di-trans,octa-cis-undecaprenyl diphospho-N-acetyl-alpha-D-muramoyl-L-alanyl-D-glutamyl-meso-2,6-diaminopimeloyl-D-alanyl-D-alanine + UDP-N-acetyl-alpha-D-glucosamine = di-trans,octa-cis-undecaprenyl diphospho-[N-acetyl-alpha-D-glucosaminyl-(1-&gt;4)]-N-acetyl-alpha-D-muramoyl-L-alanyl-D-glutamyl-meso-2,6-diaminopimeloyl-D-alanyl-D-alanine + UDP + H(+). It functions in the pathway cell wall biogenesis; peptidoglycan biosynthesis. Functionally, cell wall formation. Catalyzes the transfer of a GlcNAc subunit on undecaprenyl-pyrophosphoryl-MurNAc-pentapeptide (lipid intermediate I) to form undecaprenyl-pyrophosphoryl-MurNAc-(pentapeptide)GlcNAc (lipid intermediate II). The chain is UDP-N-acetylglucosamine--N-acetylmuramyl-(pentapeptide) pyrophosphoryl-undecaprenol N-acetylglucosamine transferase from Sinorhizobium medicae (strain WSM419) (Ensifer medicae).